The chain runs to 154 residues: Endoribonuclease YbeY (154 aa).

Zn(2+) contacts are provided by His113, His117, and His123.

This sequence belongs to the endoribonuclease YbeY family. Requires Zn(2+) as cofactor.

The protein localises to the cytoplasm. Single strand-specific metallo-endoribonuclease involved in late-stage 70S ribosome quality control and in maturation of the 3' terminus of the 16S rRNA. In Vibrio parahaemolyticus serotype O3:K6 (strain RIMD 2210633), this protein is Endoribonuclease YbeY.